A 256-amino-acid polypeptide reads, in one-letter code: Fibroblast growth factor 3 (256 aa).

A signal peptide spans Met1 to Glu18. Disordered stretches follow at residues Ala31 to Tyr54, Arg151 to Arg176, and Leu219 to Ile256. Over residues Glu238 to Ile256 the composition is skewed to basic residues.

The protein belongs to the heparin-binding growth factors family.

It localises to the secreted. In terms of biological role, plays an important role in the regulation of embryonic development, cell proliferation, and cell differentiation. The chain is Fibroblast growth factor 3 (fgf3) from Danio rerio (Zebrafish).